The primary structure comprises 125 residues: Holo-[acyl-carrier-protein] synthase (125 aa).

Mg(2+)-binding residues include aspartate 8 and glutamate 57.

This sequence belongs to the P-Pant transferase superfamily. AcpS family. Mg(2+) serves as cofactor.

The protein resides in the cytoplasm. It catalyses the reaction apo-[ACP] + CoA = holo-[ACP] + adenosine 3',5'-bisphosphate + H(+). Its function is as follows. Transfers the 4'-phosphopantetheine moiety from coenzyme A to a Ser of acyl-carrier-protein. The chain is Holo-[acyl-carrier-protein] synthase from Thermus thermophilus (strain ATCC BAA-163 / DSM 7039 / HB27).